Reading from the N-terminus, the 246-residue chain is MFPVKVKVEKSEMEMAKARNQLDAVLQCLLEKSHMDRERLDEEAGKTPLDTHNKDCSIAATGKRPSARFPHQRRKKRREMDDGLAEGGPQRSNTYVIKLFDRSVDLAQFSENTPLYPICRAWMRNSPTVRERERSPGSPLPPLPEDGEGSEVINSKNRDVYKLPPPTAPGPLGDACRSRIPSPLQPETEGTPDDEPSEPEPSPSTLIYRNMQRWKRIRQRWKEASHRNQLRYSESMKILREMYDRQ.

Residue M1 is modified to N-acetylmethionine. Glycyl lysine isopeptide (Lys-Gly) (interchain with G-Cter in SUMO2) cross-links involve residues K5 and K7. The span at 39–55 (RLDEEAGKTPLDTHNKD) shows a compositional bias: basic and acidic residues. Disordered stretches follow at residues 39–90 (RLDE…GGPQ) and 129–208 (VRER…TLIY). Phosphoserine occurs at positions 135 and 138. T167 is modified (phosphothreonine). 2 positions are modified to phosphoserine: S182 and S202.

Component of the DREAM complex (also named LINC complex) at least composed of E2F4, E2F5, LIN9, LIN37, LIN52, LIN54, MYBL1, MYBL2, RBL1, RBL2, RBBP4, TFDP1 and TFDP2. The complex exists in quiescent cells where it represses cell cycle-dependent genes. It dissociates in S phase when LIN9, LIN37, LIN52 and LIN54 form a subcomplex that binds to MYBL2.

In Mus musculus (Mouse), this protein is Protein lin-37 homolog (Lin37).